Here is a 429-residue protein sequence, read N- to C-terminus: Ribosomal RNA small subunit methyltransferase B (429 aa).

S-adenosyl-L-methionine-binding positions include 254–260, Asp277, Asp303, and Asp322; that span reads CAAPGGK. Residue Cys375 is the Nucleophile of the active site.

The protein belongs to the class I-like SAM-binding methyltransferase superfamily. RsmB/NOP family.

It localises to the cytoplasm. It carries out the reaction cytidine(967) in 16S rRNA + S-adenosyl-L-methionine = 5-methylcytidine(967) in 16S rRNA + S-adenosyl-L-homocysteine + H(+). Its function is as follows. Specifically methylates the cytosine at position 967 (m5C967) of 16S rRNA. The sequence is that of Ribosomal RNA small subunit methyltransferase B from Photorhabdus laumondii subsp. laumondii (strain DSM 15139 / CIP 105565 / TT01) (Photorhabdus luminescens subsp. laumondii).